Reading from the N-terminus, the 294-residue chain is Large ribosomal subunit protein uL4m (294 aa).

Residues 119 to 139 form a disordered region; it reads EVSGGGRKPWQQKGSGRARHG. Omega-N-methylarginine is present on Arg-147.

Belongs to the universal ribosomal protein uL4 family. As to quaternary structure, component of the mitochondrial ribosome large subunit (39S) which comprises a 16S rRNA and about 50 distinct proteins. Interacts with MIEF1 upstream open reading frame protein.

Its subcellular location is the mitochondrion. This Mus musculus (Mouse) protein is Large ribosomal subunit protein uL4m (Mrpl4).